The following is a 346-amino-acid chain: SUMO-activating enzyme subunit 1 (346 aa).

Residue methionine 1 is modified to N-acetylmethionine. Valine 2 is modified (N-acetylvaline; in SUMO-activating enzyme subunit 1, N-terminally processed). Serine 12 carries the post-translational modification Phosphoserine. The residue at position 198 (lysine 198) is an N6-acetyllysine.

It belongs to the ubiquitin-activating E1 family. As to quaternary structure, heterodimer of SAE1 and UBA2/SAE2. The heterodimer corresponds to the two domains that are encoded on a single polypeptide chain in ubiquitin-activating enzyme E1. Interacts with UBE2I. Expression level increases during S phase and drops in G2 phase (at protein level).

The protein resides in the nucleus. Its pathway is protein modification; protein sumoylation. Its function is as follows. The heterodimer acts as an E1 ligase for SUMO1, SUMO2, SUMO3, and probably SUMO4. It mediates ATP-dependent activation of SUMO proteins followed by formation of a thioester bond between a SUMO protein and a conserved active site cysteine residue on UBA2/SAE2. In Homo sapiens (Human), this protein is SUMO-activating enzyme subunit 1 (SAE1).